A 52-amino-acid chain; its full sequence is Protein YabQ (52 aa).

In terms of biological role, identified as a multicopy suppressor of the slow growth phenotype of an rsgA (yjeQ) deletion mutant. This chain is Protein YabQ (yabQ), found in Escherichia coli (strain K12).